The chain runs to 455 residues: Chromosomal replication initiator protein DnaA 2 (455 aa).

The tract at residues 1–95 (MLTCNDCSTW…KRSSPQIAAS (95 aa)) is domain I, interacts with DnaA modulators. Residues 96-112 (VTKPAVEVSEENKDFQL) form a domain II region. A domain III, AAA+ region region spans residues 113–328 (KLNGAYRFDN…GAINKLTAYC (216 aa)). ATP-binding residues include G157, G159, K160, and T161. A domain IV, binds dsDNA region spans residues 329–455 (LLFNKPLTET…IAIDSPQHFV (127 aa)).

The protein belongs to the DnaA family. As to quaternary structure, oligomerizes as a right-handed, spiral filament on DNA at oriC.

Its subcellular location is the cytoplasm. In terms of biological role, plays an essential role in the initiation and regulation of chromosomal replication. ATP-DnaA binds to the origin of replication (oriC) to initiate formation of the DNA replication initiation complex once per cell cycle. Binds the DnaA box (a 9 base pair repeat at the origin) and separates the double-stranded (ds)DNA. Forms a right-handed helical filament on oriC DNA; dsDNA binds to the exterior of the filament while single-stranded (ss)DNA is stabiized in the filament's interior. The ATP-DnaA-oriC complex binds and stabilizes one strand of the AT-rich DNA unwinding element (DUE), permitting loading of DNA polymerase. After initiation quickly degrades to an ADP-DnaA complex that is not apt for DNA replication. Binds acidic phospholipids. In Chlamydia muridarum (strain MoPn / Nigg), this protein is Chromosomal replication initiator protein DnaA 2.